A 535-amino-acid polypeptide reads, in one-letter code: Large neutral amino acids transporter small subunit 2 (535 aa).

Basic residues predominate over residues 1–10 (MEKGARHRHN). Residues 1-30 (MEKGARHRHNTDKNHAGGSESEDFPEASSG) are disordered. Over 1-44 (MEKGARHRHNTDKNHAGGSESEDFPEASSGGGGVALKKEIGLVS) the chain is Cytoplasmic. 3 positions are modified to phosphoserine: S19, S28, and S29. Residues 45–65 (ACGIIVGNIIGSGIFVSPKGV) form a helical membrane-spanning segment. Residue I53 coordinates L-leucine. The Extracellular portion of the chain corresponds to 66–73 (LENAGSVG). The chain crosses the membrane as a helical span at residues 74 to 95 (LAVIVWIVTGLITAVGALCYAE). The Cytoplasmic segment spans residues 96-116 (LGVTIPKSGGDYSYVKDIFGG). The chain crosses the membrane as a helical span at residues 117-149 (LAGFLRLWIAVLVIYPTNQAVIALTFSNYVLQP). Residue N134 participates in L-tryptophan binding. The Extracellular segment spans residues 150–157 (LFPTCFPP). Residues 158 to 178 (DSGLRLLAAICLLLLTWVNCS) form a helical membrane-spanning segment. The Cytoplasmic segment spans residues 179-181 (SVR). The helical transmembrane segment at 182–210 (WATRVQDIFTAGKLLALALIIIMGVVQIC) threads the bilayer. Residues 211–230 (KGEYFWLEPKNAFDNFQEPD) are Extracellular-facing. Residues 231–252 (IGLIALAFLQGSFAYGGWNFLN) form a helical membrane-spanning segment. G246 is an L-leucine binding site. Topologically, residues 253-265 (YVTEELVDPYKNL) are cytoplasmic. A helical transmembrane segment spans residues 266–287 (PRAIFISIPLVTFVYVFANVAY). At 288 to 312 (ITAMSPQELLASNAVAVTFGEKLLG) the chain is on the extracellular side. Residues 313–338 (VMAWIMPISVALSTFGGVNGSLFTSS) traverse the membrane as a helical segment. Residues 339–364 (RLFFAGAREGHLPSVLAMIHVKRCTP) lie on the Cytoplasmic side of the membrane. The chain crosses the membrane as a helical span at residues 365-382 (IPALLFTCLSTLLMLVTS). Over 383-386 (DMYT) the chain is Extracellular. A helical transmembrane segment spans residues 387–408 (LINYVGFINYLFYGVTVAGQIV). N395 provides a ligand contact to L-tryptophan. Residues 409 to 423 (LRWKKPDIPRPIKIN) lie on the Cytoplasmic side of the membrane. A run of 2 helical transmembrane segments spans residues 424-446 (LLFPIIYLLFWAFLLIFSLWSEP) and 447-466 (VVCGIGLAIMLTGVPVYFLG). Over 467–535 (VYWQHKPKCF…DKDSLEQSQP (69 aa)) the chain is Cytoplasmic. Positions 500–535 (GGSGTEGTREDMEEQQQPICQPSPGKDKDSLEQSQP) are disordered. The segment covering 524–535 (GKDKDSLEQSQP) has biased composition (basic and acidic residues). S529 carries the post-translational modification Phosphoserine.

This sequence belongs to the amino acid-polyamine-organocation (APC) superfamily. L-type amino acid transporter (LAT) (TC 2.A.3.8) family. In terms of assembly, disulfide-linked heterodimer composed of the catalytic light chain subunit SLC7A8 and the heavy chain subunit SLC3A2. SLC3A2 acts as a chaperone for correct plasma membrane trafficking and stabilization of SLC7A8 and modulates the substrate affinity and specificity of SLC7A8. ICAM-1 associates with the heterodimer SLC3A2/SLC7A8; facilitates leucine uptake. As to expression, mainly expressed in kidney and small intestine.

The protein localises to the cell membrane. The protein resides in the basolateral cell membrane. The catalysed reaction is L-histidine(in) + L-phenylalanine(out) = L-histidine(out) + L-phenylalanine(in). It carries out the reaction L-tryptophan(in) + L-phenylalanine(out) = L-tryptophan(out) + L-phenylalanine(in). It catalyses the reaction L-isoleucine(in) + L-phenylalanine(out) = L-isoleucine(out) + L-phenylalanine(in). The enzyme catalyses L-valine(in) + L-phenylalanine(out) = L-valine(out) + L-phenylalanine(in). The catalysed reaction is L-leucine(in) + L-phenylalanine(out) = L-leucine(out) + L-phenylalanine(in). It carries out the reaction L-glutamine(in) + L-phenylalanine(out) = L-glutamine(out) + L-phenylalanine(in). It catalyses the reaction L-cysteine(in) + L-phenylalanine(out) = L-cysteine(out) + L-phenylalanine(in). The enzyme catalyses L-phenylalanine(out) + L-methionine(in) = L-phenylalanine(in) + L-methionine(out). The catalysed reaction is L-leucine(out) + L-methionine(in) = L-leucine(in) + L-methionine(out). It carries out the reaction L-cysteine(out) + L-methionine(in) = L-cysteine(in) + L-methionine(out). It catalyses the reaction S-methylmercury-L-cysteine(out) + L-methionine(in) = S-methylmercury-L-cysteine(in) + L-methionine(out). The enzyme catalyses S-methylmercury-L-cysteine(in) + L-leucine(out) = S-methylmercury-L-cysteine(out) + L-leucine(in). The catalysed reaction is S-methylmercury-L-cysteine(in) + L-phenylalanine(out) = S-methylmercury-L-cysteine(out) + L-phenylalanine(in). It carries out the reaction L-phenylalanine(out) + L-serine(in) = L-phenylalanine(in) + L-serine(out). It catalyses the reaction L-phenylalanine(out) + glycine(in) = L-phenylalanine(in) + glycine(out). The enzyme catalyses L-phenylalanine(out) + L-alanine(in) = L-phenylalanine(in) + L-alanine(out). The catalysed reaction is 3,3',5-triiodo-L-thyronine(out) = 3,3',5-triiodo-L-thyronine(in). It carries out the reaction 3,3'-diiodo-L-thyronine(out) = 3,3'-diiodo-L-thyronine(in). It catalyses the reaction L-dopa(out) + L-phenylalanine(in) = L-dopa(in) + L-phenylalanine(out). With respect to regulation, the transporter activity is inhibited by 2-aminobicyclo-(2,2,1)heptane-2-carboxylic acid (BCH) (a specific inhibitor of system L transport). Functionally, associates with SLC3A2 to form a functional heterodimeric complex that translocates small and large neutral amino acids with broad specificity and a stoichiometry of 1:1. Functions as amino acid antiporter mediating the influx of extracellular essential amino acids mainly in exchange with the efflux of highly concentrated intracellular amino acids. Has relatively symmetrical selectivities but strongly asymmetrical substrate affinities at both the intracellular and extracellular sides of the transporter. This asymmetry allows SLC7A8 to regulate intracellular amino acid pools (mM concentrations) by exchange with external amino acids (uM concentration range), equilibrating the relative concentrations of different amino acids across the plasma membrane instead of mediating their net uptake. May play an essential role in the reabsorption of neutral amino acids from the epithelial cells to the bloodstream in the kidney. Involved in the uptake of methylmercury (MeHg) when administered as the L-cysteine or D,L-homocysteine complexes, and hence plays a role in metal ion homeostasis and toxicity. Involved in the cellular activity of small molecular weight nitrosothiols, via the stereoselective transport of L-nitrosocysteine (L-CNSO) across the transmembrane. Imports the thyroid hormone diiodothyronine (T2) and to a smaller extent triiodothyronine (T3) but not rT 3 or thyroxine (T4). Mediates the uptake of L-DOPA. May participate in auditory function. This Oryctolagus cuniculus (Rabbit) protein is Large neutral amino acids transporter small subunit 2.